Consider the following 518-residue polypeptide: Probable cytochrome P450 9h1 (518 aa).

C462 contacts heme.

The protein belongs to the cytochrome P450 family. The cofactor is heme.

The protein resides in the endoplasmic reticulum membrane. Its subcellular location is the microsome membrane. May be involved in the metabolism of insect hormones and in the breakdown of synthetic insecticides. The sequence is that of Probable cytochrome P450 9h1 (Cyp9h1) from Drosophila melanogaster (Fruit fly).